Consider the following 73-residue polypeptide: Large ribosomal subunit protein bL31 (73 aa).

This sequence belongs to the bacterial ribosomal protein bL31 family. Type A subfamily. As to quaternary structure, part of the 50S ribosomal subunit.

In terms of biological role, binds the 23S rRNA. In Jannaschia sp. (strain CCS1), this protein is Large ribosomal subunit protein bL31 (rpmE).